Here is a 449-residue protein sequence, read N- to C-terminus: CCAAT/enhancer-binding protein (449 aa).

Disordered stretches follow at residues 211–233, 276–302, and 334–386; these read HATY…TIKE, GNPL…NGSQ, and SKLH…KAKV. 3 stretches are compositionally biased toward low complexity: residues 215–229, 280–301, and 339–349; these read NNSS…SDSS, NGGN…SNGS, and QQQHQQHQQQQ. Positions 357–368 are enriched in basic and acidic residues; that stretch reads KHVDKGTDEYRR. In terms of domain architecture, bZIP spans 363–426; the sequence is TDEYRRRRER…QLHKQIYMQL (64 aa). The tract at residues 367–396 is basic motif; the sequence is RRRRERNNIAVRKSREKAKVRSREVEERVK. The segment at 398 to 405 is leucine-zipper; it reads LLKEKDAL.

The protein belongs to the bZIP family. C/EBP subfamily. Binds DNA as a dimer and can form stable heterodimers. Interacts with trbl. In terms of processing, ubiquitination/deubiquitination regulates border cell migration. Ubiquitination is stimulated by trbl, which leads to proteasomal degradation and inhibits border cell migration. Deubiquitination by Usp47, leads to its stabilization and promotes border cell migration.

It localises to the nucleus. Required for the expression of gene products mediating border cell migration. Among the DNA sequences that this protein binds with high affinity is a conserved site within the promoter of its gene. The polypeptide is CCAAT/enhancer-binding protein (slbo) (Drosophila melanogaster (Fruit fly)).